Consider the following 508-residue polypeptide: Putative glycosyl hydrolase ecdF (508 aa).

An N-terminal signal peptide occupies residues 1–15 (MFLHILCLLAGQALA). 4 N-linked (GlcNAc...) asparagine glycosylation sites follow: Asn99, Asn122, Asn275, and Asn362.

The protein belongs to the glycosyl hydrolase 32 family.

The chain is Putative glycosyl hydrolase ecdF from Aspergillus rugulosus (Emericella rugulosa).